Reading from the N-terminus, the 80-residue chain is Serine protease inhibitor Kazal-type 6 (80 aa).

Residues 1 to 23 (MKLSGMFLLLSLALFCFLTGVFS) form the signal peptide. Residue Gln-24 is modified to Pyrrolidone carboxylic acid. The Kazal-like domain maps to 24–80 (QGGQVDCGEFQDPKVYCTRESNPHCGSDGQTYGNKCAFCKAIVKSGGKISLKHPGKC). 3 cysteine pairs are disulfide-bonded: Cys-30–Cys-62, Cys-40–Cys-59, and Cys-48–Cys-80.

Its subcellular location is the secreted. In terms of biological role, serine protease inhibitor selective for kallikreins. Efficiently inhibits KLK4, KLK5, KLK6, KLK7, KLK12, KLK13 and KLK14. Doesn't inhibit KLK8. This Homo sapiens (Human) protein is Serine protease inhibitor Kazal-type 6 (SPINK6).